The chain runs to 545 residues: POTE ankyrin domain family member H (545 aa).

ANK repeat units follow at residues 180-208 (LHRA…KKDK), 209-238 (QKRT…QLNI), 242-271 (KKRT…DPNI), 275-304 (YGNT…DIES), 308-337 (HGLT…NLNA), 341-370 (YGRT…DVSS), and 374-404 (SGQT…QILK). The tract at residues 406–524 (SSENSNPEQD…KQLSEEQNTG (119 aa)) is disordered. Basic and acidic residues-rich tracts occupy residues 414–429 (QDLK…RLKG) and 443–458 (EINK…EMKK). Residues 513-524 (TQKQLSEEQNTG) are compositionally biased toward polar residues.

It belongs to the POTE family.

The sequence is that of POTE ankyrin domain family member H (POTEH) from Homo sapiens (Human).